Reading from the N-terminus, the 2595-residue chain is Glucosylceramide transporter ABCA12 (2595 aa).

The chain crosses the membrane as a helical span at residues 23–43 (PLWTLVLILWPVIIFIILAIT). Positions 109-119 (LKKPSNPKRDS) are enriched in basic and acidic residues. The segment at 109-143 (LKKPSNPKRDSNLSLRSTQVPERSHTSLATVPPRP) is disordered. N-linked (GlcNAc...) asparagine glycans are attached at residues Asn120, Asn156, Asn174, Asn214, Asn275, Asn331, Asn365, Asn381, Asn410, Asn433, Asn455, Asn526, Asn541, Asn574, Asn605, Asn645, Asn749, Asn773, Asn812, Asn823, Asn854, Asn917, and Asn960. The span at 120 to 137 (NLSLRSTQVPERSHTSLA) shows a compositional bias: polar residues. 3 consecutive transmembrane segments (helical) span residues 1062–1082 (VSYS…AAFV), 1109–1129 (FAWL…LIVI), and 1142–1162 (FILF…SYLI). Asn1167 carries N-linked (GlcNAc...) asparagine glycosylation. The next 3 membrane-spanning stretches (helical) occupy residues 1171 to 1191 (IAAL…IVLV), 1197 to 1217 (LSYV…SYAS), and 1247 to 1267 (FGWL…IAWY). N-linked (GlcNAc...) asparagine glycosylation is present at Asn1319. Residues 1346–1577 (VALHGVTKIY…FGDGYHLTLT (232 aa)) enclose the ABC transporter 1 domain. 1378–1385 (GPNGAGKT) is an ATP binding site. Asn1524, Asn1663, Asn1673, Asn1686, Asn1690, and Asn1704 each carry an N-linked (GlcNAc...) asparagine glycan. Residues 1672-1703 (SNMSLEHLTQRKVGNPSANGTSTPDDLSVSSS) form a disordered region. Residues 1687–1703 (PSANGTSTPDDLSVSSS) are compositionally biased toward polar residues. The chain crosses the membrane as a helical span at residues 1747–1767 (LIAQVILPIVFVATAMGLGTL). 5 N-linked (GlcNAc...) asparagine glycosylation sites follow: Asn1819, Asn1835, Asn1876, Asn1921, and Asn1952. 7 helical membrane passes run 1979-1999 (ATIS…GYSV), 2035-2055 (FIYD…VIAI), 2072-2092 (LLLL…AGLF), 2103-2123 (VCVN…VYFL), 2143-2163 (IFLI…SQQQ), 2187-2207 (GAMF…RLLI), and 2270-2290 (IIAV…GLLG). The ABC transporter 2 domain occupies 2254 to 2489 (VQLHRLTKTY…FGRGFTVKVH (236 aa)). 2290–2297 (GVNGAGKT) lines the ATP pocket. Asn2318, Asn2542, and Asn2547 each carry an N-linked (GlcNAc...) asparagine glycan. The span at 2575–2587 (VDTSSQGSTISVD) shows a compositional bias: polar residues. Residues 2575-2595 (VDTSSQGSTISVDSQEDQLDS) form a disordered region.

Belongs to the ABC transporter superfamily. ABCA family. Interacts with NR1H2 and ABCA1; this interaction is required for ABCA1 localization to the cell surface and is necessary for its normal activity and stability. As to expression, expressed in a number of other tissues besides skin, including heart, intestine, stomach, and kidney. Expressed mainly in the granular layer of the skin. Expressed in lung. Expressed in alpha and beta cells of pancreatic islets.

The protein resides in the cytoplasmic vesicle. The protein localises to the secretory vesicle membrane. Its subcellular location is the golgi apparatus membrane. The catalysed reaction is ATP + H2O + phospholipidSide 1 = ADP + phosphate + phospholipidSide 2.. It catalyses the reaction a beta-D-glucosylceramide(in) + ATP + H2O = a beta-D-glucosylceramide(out) + ADP + phosphate + H(+). Functionally, transports lipids such as glucosylceramides from the outer to the inner leaflet of lamellar granules (LGs) membrane, whereby the lipids are finally transported to the keratinocyte periphery via the trans-Golgi network and LGs and released to the apical surface of the granular keratinocytes to form lipid lamellae in the stratum corneum of the epidermis, which is essential for skin barrier function. In the meantime, participates in the transport of the lamellar granules-associated proteolytic enzymes, in turn regulates desquamation and keratinocyte differentiation. Furthermore, is essential for the regulation of cellular cholesterol homeostasis by regulating ABCA1-dependent cholesterol efflux from macrophages through interaction with NR1H2 and ABCA1. Plays pleiotropic roles in regulating glucose stimulated insulin secretion from beta cells, regulating the morphology and fusion of insulin granules, lipid raft abundance and the actin cytoskeleton. Also involved in lung surfactant biogenesis. This is Glucosylceramide transporter ABCA12 from Mus musculus (Mouse).